A 235-amino-acid polypeptide reads, in one-letter code: Leucyl/phenylalanyl-tRNA--protein transferase (235 aa).

It belongs to the L/F-transferase family.

The protein resides in the cytoplasm. It carries out the reaction N-terminal L-lysyl-[protein] + L-leucyl-tRNA(Leu) = N-terminal L-leucyl-L-lysyl-[protein] + tRNA(Leu) + H(+). The enzyme catalyses N-terminal L-arginyl-[protein] + L-leucyl-tRNA(Leu) = N-terminal L-leucyl-L-arginyl-[protein] + tRNA(Leu) + H(+). It catalyses the reaction L-phenylalanyl-tRNA(Phe) + an N-terminal L-alpha-aminoacyl-[protein] = an N-terminal L-phenylalanyl-L-alpha-aminoacyl-[protein] + tRNA(Phe). Its function is as follows. Functions in the N-end rule pathway of protein degradation where it conjugates Leu, Phe and, less efficiently, Met from aminoacyl-tRNAs to the N-termini of proteins containing an N-terminal arginine or lysine. In Azoarcus sp. (strain BH72), this protein is Leucyl/phenylalanyl-tRNA--protein transferase.